Reading from the N-terminus, the 138-residue chain is Mediator of RNA polymerase II transcription subunit 22 (138 aa).

Residues 13 to 40 (LKSYNSRLKEDIRSMRENFEEIIRLAKG) adopt a coiled-coil conformation.

The protein belongs to the Mediator complex subunit 22 family. In terms of assembly, component of the Mediator complex.

It is found in the nucleus. In terms of biological role, component of the Mediator complex, a coactivator involved in the regulated transcription of nearly all RNA polymerase II-dependent genes. Mediator functions as a bridge to convey information from gene-specific regulatory proteins to the basal RNA polymerase II transcription machinery. Mediator is recruited to promoters by direct interactions with regulatory proteins and serves as a scaffold for the assembly of a functional preinitiation complex with RNA polymerase II and the general transcription factors. The protein is Mediator of RNA polymerase II transcription subunit 22 (MED22) of Anopheles gambiae (African malaria mosquito).